The primary structure comprises 137 residues: Large ribosomal subunit protein uL16 (137 aa).

It belongs to the universal ribosomal protein uL16 family. In terms of assembly, part of the 50S ribosomal subunit.

Its function is as follows. Binds 23S rRNA and is also seen to make contacts with the A and possibly P site tRNAs. This chain is Large ribosomal subunit protein uL16, found in Azorhizobium caulinodans (strain ATCC 43989 / DSM 5975 / JCM 20966 / LMG 6465 / NBRC 14845 / NCIMB 13405 / ORS 571).